The sequence spans 221 residues: uncharacterized protein (221 aa).

The next 6 helical transmembrane spans lie at 33-55, 70-92, 99-121, 125-147, 154-176, and 186-208; these read YFLL…ISYI, FGYR…QKIV, LEML…FIII, YGAY…YTLL, YFND…SFWI, and IISM…ITLI.

It is found in the cell membrane. This is an uncharacterized protein from Aquifex aeolicus (strain VF5).